The sequence spans 328 residues: P2Y purinoceptor 6 (328 aa).

The Extracellular segment spans residues 1–27; the sequence is MEWDNGTGQALGLPPTTCVYRENFKQL. N-linked (GlcNAc...) asparagine glycosylation occurs at N5. Residues 28-48 traverse the membrane as a helical segment; the sequence is LLPPVYSAVLAAGLPLNICVI. Topologically, residues 49-62 are cytoplasmic; sequence TQICTSRRALTRTA. Residues 63–83 traverse the membrane as a helical segment; it reads VYTLNLALADLLYACSLPLLI. The Extracellular segment spans residues 84–101; the sequence is YNYAQGDHWPFGDFACRL. Cysteines 99 and 177 form a disulfide. Residues 102–122 traverse the membrane as a helical segment; sequence VRFLFYANLHGSILFLTCISF. Topologically, residues 123 to 144 are cytoplasmic; that stretch reads QRYLGICHPLAPWHKRGGRRAA. A helical transmembrane segment spans residues 145 to 165; that stretch reads WLVCVAVWLAVTTQCLPTAIF. The Extracellular portion of the chain corresponds to 166 to 194; sequence AATGIQRNRTVCYDLSPPALATHYMPYGM. The chain crosses the membrane as a helical span at residues 195 to 215; that stretch reads ALTVIGFLLPFAALLACYCLL. Residues 216–236 lie on the Cytoplasmic side of the membrane; that stretch reads ACRLCRQDGPAEPVAQERRGK. A helical membrane pass occupies residues 237–257; the sequence is AARMAVVVAAAFAISFLPFHI. Topologically, residues 258–280 are extracellular; sequence TKTAYLAVRSTPGVPCTVLEAFA. Residues 281–303 form a helical membrane-spanning segment; sequence AAYKGTRPFASANSVLDPILFYF. Residues 304–328 are Cytoplasmic-facing; it reads TQKKFRRRPHELLQKLTAKWQRQGR.

The protein belongs to the G-protein coupled receptor 1 family.

The protein resides in the cell membrane. In terms of biological role, receptor for extracellular UDP &gt; UTP &gt; ATP. The activity of this receptor is mediated by G proteins which activate a phosphatidylinositol-calcium second messenger system. The chain is P2Y purinoceptor 6 (P2RY6) from Homo sapiens (Human).